A 217-amino-acid polypeptide reads, in one-letter code: MQNNHLQLEQLACQRGDKILFTDLNLDAKSGDFVQIEGHNGIGKTSLLRIIVGLSFPAKGKVRWNKIEINKNREEYQHNLLYLGHLAGIKPELSAWENLQFYQKIGNCRQSEELLWDILQKVGLLGREDLPAGQLSAGQQKRIALARLWLSNAALWILDEPFTAIDKQGVNVLTQLFEQHVENGGIVILTSHQEIPSNKLQKVRLDQYKFFDQGNMA.

The ABC transporter domain occupies 6 to 216 (LQLEQLACQR…QYKFFDQGNM (211 aa)). 38–45 (GHNGIGKT) contributes to the ATP binding site.

This sequence belongs to the ABC transporter superfamily. CcmA exporter (TC 3.A.1.107) family. In terms of assembly, the complex is composed of two ATP-binding proteins (CcmA) and two transmembrane proteins (CcmB).

It is found in the cell inner membrane. It carries out the reaction heme b(in) + ATP + H2O = heme b(out) + ADP + phosphate + H(+). Functionally, part of the ABC transporter complex CcmAB involved in the biogenesis of c-type cytochromes; once thought to export heme, this seems not to be the case, but its exact role is uncertain. Responsible for energy coupling to the transport system. This chain is Cytochrome c biogenesis ATP-binding export protein CcmA, found in Histophilus somni (strain 129Pt) (Haemophilus somnus).